A 236-amino-acid polypeptide reads, in one-letter code: tRNA (guanine-N(7)-)-methyltransferase (236 aa).

The segment covering 1–17 has biased composition (basic and acidic residues); it reads MSERKSDPDRDDSERAF. Positions 1–23 are disordered; sequence MSERKSDPDRDDSERAFFGRRKG. 4 residues coordinate S-adenosyl-L-methionine: glutamate 67, glutamate 92, aspartate 119, and aspartate 141. Aspartate 141 is an active-site residue. The substrate site is built by lysine 145 and aspartate 177.

Belongs to the class I-like SAM-binding methyltransferase superfamily. TrmB family.

The enzyme catalyses guanosine(46) in tRNA + S-adenosyl-L-methionine = N(7)-methylguanosine(46) in tRNA + S-adenosyl-L-homocysteine. Its pathway is tRNA modification; N(7)-methylguanine-tRNA biosynthesis. Its function is as follows. Catalyzes the formation of N(7)-methylguanine at position 46 (m7G46) in tRNA. The chain is tRNA (guanine-N(7)-)-methyltransferase from Bradyrhizobium diazoefficiens (strain JCM 10833 / BCRC 13528 / IAM 13628 / NBRC 14792 / USDA 110).